The primary structure comprises 140 residues: Protein archease (140 aa).

Ca(2+) contacts are provided by Asp-12, Asp-139, and Leu-140.

Belongs to the archease family.

Its function is as follows. Activates the tRNA-splicing ligase complex by facilitating the enzymatic turnover of catalytic subunit RtcB. Acts by promoting the guanylylation of RtcB, a key intermediate step in tRNA ligation. Can also alter the NTP specificity of RtcB such that ATP, dGTP or ITP is used efficiently. May also act as a chaperone or modulator of proteins involved in DNA or RNA processing. This chain is Protein archease, found in Methanothermobacter thermautotrophicus (strain ATCC 29096 / DSM 1053 / JCM 10044 / NBRC 100330 / Delta H) (Methanobacterium thermoautotrophicum).